A 66-amino-acid chain; its full sequence is Alpha-conotoxin GIB (66 aa).

Residues M1–S21 form the signal peptide. A propeptide spanning residues F22 to K49 is cleaved from the precursor. Cystine bridges form between C51/C56 and C52/C62. G64 is modified (glycine amide).

It belongs to the conotoxin A superfamily. In terms of tissue distribution, expressed by the venom duct.

The protein resides in the secreted. Its function is as follows. Alpha-conotoxins act on postsynaptic membranes, they bind to the nicotinic acetylcholine receptors (nAChR) and thus inhibit them. Both the globular (with C1-C3; C2-C4 disulfide pattern) and ribbon (C1-C4; C2-C3) isomers reversibly inhibit human muscle-type alpha-1-beta-1-delta-epsilon/CHRNA1-CHRNB1-CHRND-CHRNE nAChRs (IC(50)=116 nM and IC(50)=643 nM, respectively). Both isomers also inhibit alpha-7/CHRNA7 and alpha-9-alpha-10/CHRNA9-CHRNA10 (IC(50)=1113 nM by globular isomer) nAChRs. This chain is Alpha-conotoxin GIB, found in Conus geographus (Geography cone).